A 217-amino-acid polypeptide reads, in one-letter code: Ras-related protein Rab-39A (217 aa).

Serine 17, glycine 20, lysine 21, serine 22, cysteine 23, and threonine 44 together coordinate GTP. Residue serine 22 coordinates Mg(2+). Residues 39-47 form a switch-I region; the sequence is PACDPTVGV. Mg(2+)-binding residues include threonine 44 and aspartate 68. Glycine 71, histidine 127, lysine 128, aspartate 130, alanine 158, and lysine 159 together coordinate GTP. The switch-II stretch occupies residues 71 to 87; it reads GQERFRSITRSYYRNSV. Residues cysteine 215 and cysteine 217 are each lipidated (S-geranylgeranyl cysteine). Cysteine methyl ester is present on cysteine 217.

The protein belongs to the small GTPase superfamily. Rab family. In terms of assembly, interacts (GDP-bound) with C9orf72; C9orf72 acts as a GEF for RAB39A. Interacts (GTP-bound) with HOPS complex components VPS39 and VPS41, and STX17; interaction between HOPS components and RAB39A contributes to obtaining a functional HOPS complex that promotes membrane fusion driven by STX17-SNAP29-VAMP8. Interacts with BECN1. Probably associates with the PI3K (PI3KC3/PI3K-III/class III phosphatidylinositol 3-kinase) complex. Interacts with UACA. Interacts with isoform a of RASSF1. Does not interact with isoform c of RASSF1. It depends on Mg(2+) as a cofactor. In terms of processing, prenylated. Prenylation is required for association with cellular membranes.

It localises to the cell membrane. It is found in the cytoplasmic vesicle. The protein resides in the phagosome membrane. Its subcellular location is the lysosome membrane. The protein localises to the autolysosome membrane. The catalysed reaction is GTP + H2O = GDP + phosphate + H(+). Its activity is regulated as follows. Regulated by guanine nucleotide exchange factors (GEFs) including c9Orf72, which promote the exchange of bound GDP for free GTP. Regulated by GTPase activating proteins (GAPs) which increase the GTP hydrolysis activity. Inhibited by GDP dissociation inhibitors (GDIs). Functionally, the small GTPases Rab are key regulators of intracellular membrane trafficking, from the formation of transport vesicles to their fusion with membranes. Rabs cycle between an inactive GDP-bound form and an active GTP-bound form that is able to recruit to membranes different sets of downstream effectors directly responsible for vesicle formation, movement, tethering and fusion. RAB39A regulates autophagosome-lysosome fusion via recruitment of the HOPS endosomal tethering complex onto lysosomes; this process involves lysosomal RAB39A and autophagosomal RAB2A recruitment of HOPS subcomplexes VPS41-VPS16-VPS18-VPS33A and VPS39-VPS11, respectively, which assemble into a functional complex to mediate membrane tethering and SNAREs-driven membrane fusion. Also negatively regulates lipopolysaccharide (LPS)-induced autophagosome formation in macrophages, possibly by implicating PI3K. Promotes the delivery of MHC-I molecules from the ER to phagosomes and the generation of peptide-loaded MHC-I complexes in phagosomes, thus enhancing antigen cross-presentation by dendritic cells. Plays a role in the maturation and acidification of phagosomes that engulf pathogens, such as S.aureus and M.tuberculosis. Plays a role in the fusion of phagosomes with lysosomes. May be involved in multiple neurite formation. In Homo sapiens (Human), this protein is Ras-related protein Rab-39A.